A 176-amino-acid chain; its full sequence is Large ribosomal subunit protein uL16 (176 aa).

This sequence belongs to the universal ribosomal protein uL16 family.

This chain is Large ribosomal subunit protein uL16, found in Sulfolobus acidocaldarius (strain ATCC 33909 / DSM 639 / JCM 8929 / NBRC 15157 / NCIMB 11770).